The following is a 143-amino-acid chain: UPF0225 protein Reut_A0143 (143 aa).

It belongs to the UPF0225 family.

The polypeptide is UPF0225 protein Reut_A0143 (Cupriavidus pinatubonensis (strain JMP 134 / LMG 1197) (Cupriavidus necator (strain JMP 134))).